The chain runs to 280 residues: 4-diphosphocytidyl-2-C-methyl-D-erythritol kinase (280 aa).

Lys-8 is a catalytic residue. 91–101 (PVSAGLAGGSS) contributes to the ATP binding site. The active site involves Asp-133.

It belongs to the GHMP kinase family. IspE subfamily.

It catalyses the reaction 4-CDP-2-C-methyl-D-erythritol + ATP = 4-CDP-2-C-methyl-D-erythritol 2-phosphate + ADP + H(+). It functions in the pathway isoprenoid biosynthesis; isopentenyl diphosphate biosynthesis via DXP pathway; isopentenyl diphosphate from 1-deoxy-D-xylulose 5-phosphate: step 3/6. Its function is as follows. Catalyzes the phosphorylation of the position 2 hydroxy group of 4-diphosphocytidyl-2C-methyl-D-erythritol. The chain is 4-diphosphocytidyl-2-C-methyl-D-erythritol kinase from Clostridium novyi (strain NT).